The chain runs to 201 residues: Oligoribonuclease (201 aa).

Residues 5–169 (MVWIDCEMTG…ADIRDSITEL (165 aa)) form the Exonuclease domain. Tyr-126 is a catalytic residue.

The protein belongs to the oligoribonuclease family.

The protein localises to the cytoplasm. Its function is as follows. 3'-to-5' exoribonuclease specific for small oligoribonucleotides. This chain is Oligoribonuclease, found in Streptomyces griseus.